Reading from the N-terminus, the 530-residue chain is MAVSSAFVVTPKLEKLLANHHNPTYSSSPAPLDVIGIRALPMNNRNKRGLIQRARCEISPSNKAASISALEQLKTSAIDRYTKERSSIVVIGLSIHTAPVEMREKLAIPEAEWPRAIAELCGLNHIEEAAVLSTCNRMEIYVLALSQHRGVKEVTEWMSKTSGIPVSEICQHRFLLYNKDVTQHIFEVSAGLDSLVLGEGQILAQVKQVVKVGQGVNGFGRNISGLFKHAITVGKRVRTETNIAAGAVSVSSAAVELALMKLPESSHASSARMLVVGAGKMGKLVIKHLVAKGCTKMVVVNRSEEKVAAVRNEMPPGVEIIYKPLDEMLSCAAEADVVFTSTASETPLFLKEQVETLPPVRDARLFVDISVPRNVGSCVAEIDGTRVFNVDDLKEVVAANKEDRVRKAMDAQAIITDESKHFEAWRDSLETVPTIKKLRGYTERIIAAEIEKSLPKMGIDMNKKMRKTVDDLIRGIVNKLLHGPMQHLRCDGNDSRTLSETLDNMQALNRMYGLDAEILEEKIRAKVEKK.

Residues 1–64 constitute a chloroplast transit peptide; the sequence is MAVSSAFVVT…RCEISPSNKA (64 aa). Substrate-binding positions include 134-137, S194, 199-201, and Q205; these read TCNR and EGQ. C135 acts as the Nucleophile in catalysis. 277-282 contacts NADP(+); the sequence is GAGKMG.

This sequence belongs to the glutamyl-tRNA reductase family. In terms of tissue distribution, expressed in roots and flowers. Detected in leaves, hypocotyls and cotyledons.

It is found in the plastid. The protein localises to the chloroplast. The catalysed reaction is (S)-4-amino-5-oxopentanoate + tRNA(Glu) + NADP(+) = L-glutamyl-tRNA(Glu) + NADPH + H(+). The protein operates within porphyrin-containing compound metabolism; protoporphyrin-IX biosynthesis; 5-aminolevulinate from L-glutamyl-tRNA(Glu): step 1/2. Its pathway is porphyrin-containing compound metabolism; chlorophyll biosynthesis. Functionally, catalyzes the NADPH-dependent reduction of glutamyl-tRNA(Glu) to glutamate 1-semialdehyde (GSA). Probably involved in wound-induced supply of heme to defensive hemoproteins outside plastids. This Arabidopsis thaliana (Mouse-ear cress) protein is Glutamyl-tRNA reductase 2, chloroplastic (HEMA2).